The primary structure comprises 633 residues: Endosomal/prevacuolar sodium/hydrogen exchanger (633 aa).

The first 21 residues, 1-21 (MLSKVLLNIAFKVLLTTAKRA), serve as a signal peptide directing secretion. Residues 22-61 (VDPDDDDELLPSPDLPGSDDPIAGDPDVDLNPVTEEMFSS) are Lumenal-facing. Positions 25-44 (DDDDELLPSPDLPGSDDPIA) are disordered. Low complexity predominate over residues 31-42 (LPSPDLPGSDDP). The chain crosses the membrane as a helical span at residues 62–82 (WALFIMLLLLISALWSSYYLT). Over 83–85 (QKR) the chain is Cytoplasmic. Residues 86 to 106 (IRAVHETVLSIFYGMVIGLII) form a helical membrane-spanning segment. The Lumenal portion of the chain corresponds to 107-117 (RMSPGHYIQDT). The chain crosses the membrane as a helical span at residues 118–138 (VTFNSSYFFNVLLPPIILNSG). Positions 124–133 (YFFNVLLPPI) match the Amiloride-binding motif. Residues 139–152 (YELNQVNFFNNMLS) are Cytoplasmic-facing. A helical transmembrane segment spans residues 153 to 173 (ILIFAIPGTFISAVVIGIILY). Topologically, residues 174-189 (IWTFLGLESIDISFAD) are lumenal. The helical transmembrane segment at 190-211 (AMSVGATLSATDPVTILSIFNA) threads the bilayer. Over 212–217 (YKVDPK) the chain is Cytoplasmic. A helical transmembrane segment spans residues 218–238 (LYTIIFGESLLNDAISIVMFE). Topologically, residues 239-258 (TCQKFHGQPATFSSVFEGAG) are lumenal. Residues 259–279 (LFLMTFSVSLLIGVLIGILVA) form a helical membrane-spanning segment. Residues 280–288 (LLLKHTHIR) lie on the Cytoplasmic side of the membrane. Residues 289-308 (RYPQIESCLILLIAYESYFF) form a helical membrane-spanning segment. The Lumenal segment spans residues 309–313 (SNGCH). A helical transmembrane segment spans residues 314 to 333 (MSGIVSLLFCGITLKHYAYY). Topologically, residues 334-344 (NMSRRSQITIK) are cytoplasmic. The chain crosses the membrane as a helical span at residues 345 to 364 (YIFQLLARLSENFIFIYLGL). Residues 365–376 (ELFTEVELVYKP) are Cytoplasmic-facing. Residues 377-397 (LLIIVAAISICVARWCAVFPL) form a helical membrane-spanning segment. At 398 to 431 (SQFVNWIYRVKTIRSMSGITGENISVPDEIPYNY) the chain is on the lumenal side. N420 carries N-linked (GlcNAc...) asparagine glycosylation. The helical transmembrane segment at 432 to 452 (QMMTFWAGLRGAVGVALALGI) threads the bilayer. Over 453-457 (QGEYK) the chain is Cytoplasmic. Residues 458 to 478 (FTLLATVLVVVVLTVIIFGGT) form a helical membrane-spanning segment. T490 carries the post-translational modification Phosphothreonine. S494 bears the Phosphoserine mark. T498 carries the phosphothreonine modification. S499 carries the post-translational modification Phosphoserine. N-linked (GlcNAc...) asparagine glycosylation is found at N515, N550, and N563. Positions 553–578 (TTGGNTFGGLNETENTSPNPARSSMD) are disordered. Residues 564–574 (ETENTSPNPAR) show a composition bias toward polar residues. Phosphoserine is present on S569.

Belongs to the monovalent cation:proton antiporter 1 (CPA1) transporter (TC 2.A.36) family. In terms of assembly, interacts with CYP6.

The protein localises to the endosome membrane. Its subcellular location is the prevacuolar compartment membrane. Functionally, endosomal/prevacuolar electroneutral Na(+)/H(+) exchanger which mediates intracellular sequestration of Na(+) cations, regulates vacuolar pH and contributes to osmotolerance following sudden exposure to hyperosmotic media. Also contributes to the postdiauxic/stationary phase resistance to osmotic stress and allows for the continued growth of cells until the acquired osmotolerance response can occur. Involved in hygromycin resistance probably through its influence on the electrochemical proton gradient affecting secondarily the entrance of hygromycin. Mediates pH-dependent vesicle trafficking out of the endosome. Contributes to K(+) sequestration and homeostasis. This is Endosomal/prevacuolar sodium/hydrogen exchanger (NHX1) from Saccharomyces cerevisiae (strain ATCC 204508 / S288c) (Baker's yeast).